The primary structure comprises 308 residues: tRNA dimethylallyltransferase (308 aa).

14–21 (GPTASGKT) provides a ligand contact to ATP. Residue 16–21 (TASGKT) coordinates substrate. Interaction with substrate tRNA stretches follow at residues 39–42 (DSAL), 163–167 (QRLSR), and 244–249 (RCVGYR).

The protein belongs to the IPP transferase family. As to quaternary structure, monomer. The cofactor is Mg(2+).

It carries out the reaction adenosine(37) in tRNA + dimethylallyl diphosphate = N(6)-dimethylallyladenosine(37) in tRNA + diphosphate. In terms of biological role, catalyzes the transfer of a dimethylallyl group onto the adenine at position 37 in tRNAs that read codons beginning with uridine, leading to the formation of N6-(dimethylallyl)adenosine (i(6)A). This is tRNA dimethylallyltransferase from Shewanella loihica (strain ATCC BAA-1088 / PV-4).